The following is an 839-amino-acid chain: Protein translocase subunit SecA (839 aa).

Residues Q85, 103 to 107 (GEGKT), and D493 each bind ATP. A compositionally biased stretch (basic and acidic residues) spans 780–790 (QIHEQERERAS). The tract at residues 780-839 (QIHEQERERASQRATTAAPQNIQSQQSANTDDLPKVERNEACPCGSGKKFKNCHGRKSFS) is disordered. Polar residues predominate over residues 791-809 (QRATTAAPQNIQSQQSANT). Positions 821, 823, 832, and 833 each coordinate Zn(2+). The span at 827–839 (KKFKNCHGRKSFS) shows a compositional bias: basic residues.

This sequence belongs to the SecA family. In terms of assembly, monomer and homodimer. Part of the essential Sec protein translocation apparatus which comprises SecA, SecYEG and auxiliary proteins SecDF. Other proteins may also be involved. It depends on Zn(2+) as a cofactor.

Its subcellular location is the cell membrane. It is found in the cytoplasm. It carries out the reaction ATP + H2O + cellular proteinSide 1 = ADP + phosphate + cellular proteinSide 2.. Functionally, part of the Sec protein translocase complex. Interacts with the SecYEG preprotein conducting channel. Has a central role in coupling the hydrolysis of ATP to the transfer of proteins into and across the cell membrane, serving as an ATP-driven molecular motor driving the stepwise translocation of polypeptide chains across the membrane. The protein is Protein translocase subunit SecA of Streptococcus pyogenes serotype M3 (strain ATCC BAA-595 / MGAS315).